Reading from the N-terminus, the 245-residue chain is Phycocyanobilin:ferredoxin oxidoreductase (245 aa).

This sequence belongs to the HY2 family.

It carries out the reaction (2R,3Z)-phycocyanobilin + 4 oxidized [2Fe-2S]-[ferredoxin] = biliverdin IXalpha + 4 reduced [2Fe-2S]-[ferredoxin] + 4 H(+). In terms of biological role, catalyzes the four-electron reduction of biliverdin IX-alpha (2-electron reduction at both the A and D rings); the reaction proceeds via an isolatable 2-electron intermediate, 181,182-dihydrobiliverdin. In Trichormus variabilis (strain ATCC 29413 / PCC 7937) (Anabaena variabilis), this protein is Phycocyanobilin:ferredoxin oxidoreductase.